Here is a 322-residue protein sequence, read N- to C-terminus: Olfactory receptor 11L1 (322 aa).

The Extracellular portion of the chain corresponds to 1–25 (MEPQNTSTVTNFQLLGFQNLLEWQA). Residue Asn5 is glycosylated (N-linked (GlcNAc...) asparagine). Residues 26 to 46 (LLFVIFLLIYCLTIIGNVVII) traverse the membrane as a helical segment. Residues 47–54 (TVVSQGLR) lie on the Cytoplasmic side of the membrane. Residues 55-75 (LHSPMYMFLQHLSFLEVWYTS) traverse the membrane as a helical segment. The Extracellular segment spans residues 76–99 (TTVPLLLANLLSWGQAISFSACMA). Residues Cys97 and Cys189 are joined by a disulfide bond. A helical transmembrane segment spans residues 100–120 (QLYFFVFLGATECFLLAFMAY). At 121–139 (DRYLAICSPLRYPFLMHRG) the chain is on the cytoplasmic side. A helical membrane pass occupies residues 140–160 (LCARLVVVSWCTGVSTGFLPS). Over 161-197 (LMISRLDFCGRNQINHFFCDLPPLMQLSCSRVYITEV) the chain is Extracellular. The helical transmembrane segment at 198–217 (TIFILSIAVLCICFFLTLGP) threads the bilayer. Over 218–237 (YVFIVSSILRIPSTSGRRKT) the chain is Cytoplasmic. The chain crosses the membrane as a helical span at residues 238 to 258 (FSTCGSHLAVVTLYYGTMISM). Residues 259 to 271 (YVCPSPHLLPEIN) are Extracellular-facing. Residues 272–292 (KIISVFYTVVTPLLNPVIYSL) form a helical membrane-spanning segment. The Cytoplasmic portion of the chain corresponds to 293 to 322 (RNKDFKEAVRKVMRRKCGILWSTSKRKFLY).

Belongs to the G-protein coupled receptor 1 family.

It localises to the cell membrane. In terms of biological role, odorant receptor. This chain is Olfactory receptor 11L1 (OR11L1), found in Homo sapiens (Human).